The following is a 9904-amino-acid chain: Extracellular matrix-binding protein ebh (9904 aa).

The N-terminal stretch at 1–39 (MNYRDKIQKFSIRKYTVGTFSTVIATLVFLGFNTSQAHA) is a signal peptide. A compositionally biased stretch (polar residues) spans 41–59 (ETNQPASVVKQKQQSNNEQ). Disordered stretches follow at residues 41–153 (ETNQ…NDNR) and 250–277 (PQRQ…PRSV). Positions 65 to 78 (SQVQNSQNSQNSQS) are enriched in low complexity. The segment covering 79–117 (LSATHENEQPNISQANLVDQKVAQSSTTNDEQPASQNVN) has biased composition (polar residues). The span at 130–140 (PDKEEGKHKQN) shows a compositional bias: basic and acidic residues. Composition is skewed to polar residues over residues 141-151 (ESQSANKNGND) and 250-266 (PQRQ…QTRS). FIVAR domains follow at residues 2524 to 2580 (AKNH…VSDA), 2610 to 2666 (SKNN…ISEE), 2687 to 2750 (DTHT…VQTA), 2780 to 2836 (AKTK…IAEE), 2864 to 2919 (AKTQ…IRQN), 2947 to 3002 (AKNQ…INTN), 3030 to 3085 (AKTQ…INDK), 3154 to 3212 (AMTK…VNQK), 3280 to 3339 (AMTG…VNNA), 3407 to 3465 (AMGN…VNRA), 3533 to 3591 (AMGN…VTEA), 3659 to 3717 (AMNT…ITQK), 3785 to 3843 (AMAS…VEAA), 3911 to 3969 (AMGN…VEQA), 4037 to 4095 (AMGT…VTAA), 4160 to 4208 (DKDA…VDNA), 4276 to 4334 (AMGA…INGM), 4402 to 4460 (AMTA…VNSA), 4528 to 4586 (AMKG…ITQA), 4654 to 4712 (AMHS…VEQA), 4780 to 4838 (AMGQ…VERA), 4906 to 4964 (AMTA…VTNA), 5032 to 5090 (AMKG…INQA), 5158 to 5216 (AMTN…VESA), 5284 to 5342 (AMSN…VEQA), 5410 to 5468 (AMNQ…INQK), 5536 to 5593 (AMGN…VQAA), 5661 to 5719 (AMGQ…VEAA), 5787 to 5845 (AMQR…VEQA), 5913 to 5971 (AMDQ…VTAA), 6039 to 6097 (AMNQ…VTQA), 6175 to 6223 (DKDQ…VEAA), 6291 to 6349 (AMGN…VEAA), 6417 to 6475 (AMDK…INQA), 6543 to 6601 (AMGN…VEQA), 6669 to 6727 (AMTQ…ITAA), 6795 to 6853 (AMTQ…IQQA), 6921 to 6979 (AMTN…VEQA), 7047 to 7105 (AMTQ…VAQA), 7173 to 7231 (AMGT…VTQA), 7299 to 7357 (AMGN…ITRA), 7425 to 7486 (AMDQ…ITNE), 7551 to 7609 (AMEL…VNGA), 7677 to 7735 (AMGN…VEQA), 7803 to 7860 (AMHG…INQA), 7928 to 7986 (LMDA…VSSA), 8054 to 8112 (AIKA…IDQA), 8180 to 8238 (AMEA…VEQL), 8306 to 8364 (AMQA…VEQL), 8432 to 8490 (AMET…VEQA), 8558 to 8612 (SMDQ…VDQA), 8680 to 8739 (AMDQ…VIKL), and 8934 to 8990 (AMET…INGA). Residues 9710-9730 (IKNAIGVVGISGLLASFWFFI) traverse the membrane as a helical segment. The disordered stretch occupies residues 9807–9904 (RRKEDEEDVE…KKKKSKKNKK (98 aa)). 2 stretches are compositionally biased toward basic and acidic residues: residues 9822 to 9832 (TDEKVLKDNEH) and 9871 to 9881 (QKDNQSKDKKS). The span at 9886-9904 (TSKKVAAKKKKKKSKKNKK) shows a compositional bias: basic residues.

It is found in the cell membrane. The chain is Extracellular matrix-binding protein ebh (ebh) from Staphylococcus aureus (strain MW2).